We begin with the raw amino-acid sequence, 423 residues long: UPF0229 protein PST_0721 (423 aa).

The interval 84–109 (AGERIPRPQGGGGGQGAGQASNSGEG) is disordered.

Belongs to the UPF0229 family.

This chain is UPF0229 protein PST_0721, found in Stutzerimonas stutzeri (strain A1501) (Pseudomonas stutzeri).